The chain runs to 102 residues: UPF0213 protein in potE 3'region (102 aa).

A GIY-YIG domain is found at 6-81; sequence SPWHLYMLRL…KQLSKTQKER (76 aa).

Belongs to the UPF0213 family.

This chain is UPF0213 protein in potE 3'region, found in Serratia liquefaciens.